Reading from the N-terminus, the 461-residue chain is Asparagine--tRNA ligase (461 aa).

It belongs to the class-II aminoacyl-tRNA synthetase family. In terms of assembly, homodimer.

It localises to the cytoplasm. It catalyses the reaction tRNA(Asn) + L-asparagine + ATP = L-asparaginyl-tRNA(Asn) + AMP + diphosphate + H(+). This chain is Asparagine--tRNA ligase, found in Oleidesulfovibrio alaskensis (strain ATCC BAA-1058 / DSM 17464 / G20) (Desulfovibrio alaskensis).